A 422-amino-acid polypeptide reads, in one-letter code: Glutamate-1-semialdehyde 2,1-aminomutase (422 aa).

K258 is modified (N6-(pyridoxal phosphate)lysine).

It belongs to the class-III pyridoxal-phosphate-dependent aminotransferase family. HemL subfamily. In terms of assembly, homodimer. Pyridoxal 5'-phosphate is required as a cofactor.

The protein localises to the cytoplasm. The enzyme catalyses (S)-4-amino-5-oxopentanoate = 5-aminolevulinate. It participates in porphyrin-containing compound metabolism; protoporphyrin-IX biosynthesis; 5-aminolevulinate from L-glutamyl-tRNA(Glu): step 2/2. This is Glutamate-1-semialdehyde 2,1-aminomutase from Chlamydia trachomatis serovar L2 (strain ATCC VR-902B / DSM 19102 / 434/Bu).